Reading from the N-terminus, the 529-residue chain is MSKHWTERIAEELSQQKKDEYIIGSGTSISGSVHIGNSCDIFIANAVSKELRKIGENAKTVWIADDYDPLRKVPYPLPENYSKYLGQPYYEIPCPEGCCENFVEHFQKPFVNSLKPFDIENLEIKSGAQMYKNGVYTEATKVALENTERIREIFNEYREHPLSEDWLPYNAICSECGRVNTTHAYDFEGTNIKYKCDCGHEGEVDYTTGMGKLTWRVEWAARWKILNITCEPFGKDHAASGGSYDVSKIISDEIFNYPAPYPVPYEWITLDGDAMSKSKGVFFSPEAWLKIGKPETLNYYIFRNKPLKPKDFTPKMGFLDLMDQYDRVERIAYGQEEASNEKEKEKLTKIYEVSQINDMPDEMPFQPSYRFLTVAYQIANGNANKIYTILKNNNQLPERLENVTFEDLSEFDRDTFLQRIEYVHNWLETYGPKFVKFQVMNKMPRIEITDEQKEFLKQIANILESETFENDVQFHDRMYEVLESLGMKPQKAFQAIYKTIIGKKQGPRAASFVLSLDKDFVIKRFRLEE.

The short motif at 29–37 (ISGSVHIGN) is the 'HIGH' region element. The 'KMSKS' region motif lies at 274–278 (AMSKS). Lys277 lines the ATP pocket.

Belongs to the class-I aminoacyl-tRNA synthetase family.

It is found in the cytoplasm. The enzyme catalyses tRNA(Lys) + L-lysine + ATP = L-lysyl-tRNA(Lys) + AMP + diphosphate. The sequence is that of Lysine--tRNA ligase from Methanosphaera stadtmanae (strain ATCC 43021 / DSM 3091 / JCM 11832 / MCB-3).